A 362-amino-acid polypeptide reads, in one-letter code: Protein RecA (362 aa).

67–74 (GPESSGKT) is a binding site for ATP. Residues 337-356 (VADAPADSAPAPVAAVAPKA) are compositionally biased toward low complexity. A disordered region spans residues 337-362 (VADAPADSAPAPVAAVAPKASARKSA).

The protein belongs to the RecA family.

Its subcellular location is the cytoplasm. Can catalyze the hydrolysis of ATP in the presence of single-stranded DNA, the ATP-dependent uptake of single-stranded DNA by duplex DNA, and the ATP-dependent hybridization of homologous single-stranded DNAs. It interacts with LexA causing its activation and leading to its autocatalytic cleavage. In Clavibacter michiganensis subsp. michiganensis (strain NCPPB 382), this protein is Protein RecA.